Reading from the N-terminus, the 93-residue chain is U12-lycotoxin-Ls1d (93 aa).

A signal peptide spans M1–S18. The propeptide occupies E19 to R38.

This sequence belongs to the neurotoxin 31 family. In terms of processing, contains 5 disulfide bonds. In terms of tissue distribution, expressed by the venom gland.

It is found in the secreted. This chain is U12-lycotoxin-Ls1d, found in Lycosa singoriensis (Wolf spider).